The following is a 360-amino-acid chain: Glutaminyl-peptide cyclotransferase (360 aa).

The first 23 residues, 1–23 (MKYLKILIIVTIFFFLLINVINC), serve as a signal peptide directing secretion. Asparagine 135 is a glycosylation site (N-linked (GlcNAc...) asparagine). Residue aspartate 165 coordinates Zn(2+). Glutamate 199 (proton acceptor) is an active-site residue. Position 200 (glutamate 200) interacts with Zn(2+). Aspartate 251 functions as the Proton acceptor in the catalytic mechanism. Histidine 330 provides a ligand contact to Zn(2+).

The protein belongs to the glutaminyl-peptide cyclotransferase family.

Its subcellular location is the secreted. The enzyme catalyses N-terminal L-glutaminyl-[peptide] = N-terminal 5-oxo-L-prolyl-[peptide] + NH4(+). Responsible for the biosynthesis of pyroglutamyl peptides. Has a bias against acidic and tryptophan residues adjacent to the N-terminal glutaminyl residue and a lack of importance of chain length after the second residue. Also catalyzes N-terminal pyroglutamate formation. The chain is Glutaminyl-peptide cyclotransferase (qpct) from Dictyostelium discoideum (Social amoeba).